A 147-amino-acid polypeptide reads, in one-letter code: Protein-export protein SecB 2 (147 aa).

Belongs to the SecB family. In terms of assembly, homotetramer, a dimer of dimers. One homotetramer interacts with 1 SecA dimer.

It is found in the cytoplasm. One of the proteins required for the normal export of preproteins out of the cell cytoplasm. It is a molecular chaperone that binds to a subset of precursor proteins, maintaining them in a translocation-competent state. It also specifically binds to its receptor SecA. The protein is Protein-export protein SecB 2 of Francisella tularensis subsp. holarctica (strain FTNF002-00 / FTA).